The primary structure comprises 174 residues: Rubredoxin-2 (174 aa).

The 53-residue stretch at 1 to 53 (MAKYQCPDCEYIYDEVAGHPHEGFPPGTSWETIPEEWACPDCAVRDKADFVVI) folds into the Rubredoxin-like 1 domain. The Fe cation site is built by Cys-6, Cys-9, Cys-39, and Cys-42. Residues 56–65 (GSASPASGAA) show a composition bias toward low complexity. The disordered stretch occupies residues 56 to 115 (GSASPASGAATPEVRTATTPPKAEASPQKSTGASTPSANNKAKAKAKAKPARAKSSKDST). Over residues 97 to 109 (AKAKAKAKPARAK) the composition is skewed to basic residues. The region spanning 121-172 (FRKWICITCGHIYDEALGDETEGFAPGTLFEDIPDDWCCPDCGATKEDYVLH) is the Rubredoxin-like 2 domain. Positions 126, 129, 159, and 162 each coordinate Fe cation.

This sequence belongs to the rubredoxin family. Fe(3+) is required as a cofactor.

It localises to the cytoplasm. It participates in hydrocarbon metabolism; alkane degradation. Involved in the hydrocarbon hydroxylating system, which transfers electrons from NADH to rubredoxin reductase and then through rubredoxin to alkane 1 monooxygenase. The sequence is that of Rubredoxin-2 (alkG) from Alcanivorax borkumensis (strain ATCC 700651 / DSM 11573 / NCIMB 13689 / SK2).